The primary structure comprises 308 residues: Ferrochelatase (308 aa).

The Fe cation site is built by His-167 and Glu-239.

This sequence belongs to the ferrochelatase family.

It is found in the cytoplasm. The catalysed reaction is heme b + 2 H(+) = protoporphyrin IX + Fe(2+). It functions in the pathway porphyrin-containing compound metabolism; protoheme biosynthesis; protoheme from protoporphyrin-IX: step 1/1. In terms of biological role, catalyzes the ferrous insertion into protoporphyrin IX. The polypeptide is Ferrochelatase (Thermoplasma acidophilum (strain ATCC 25905 / DSM 1728 / JCM 9062 / NBRC 15155 / AMRC-C165)).